We begin with the raw amino-acid sequence, 227 residues long: Cytochrome c oxidase subunit 2 (227 aa).

At 1–14 (MALPFQLGFQDATS) the chain is on the mitochondrial intermembrane side. The chain crosses the membrane as a helical span at residues 15-45 (PIMEELLHFHDHTLMIVFMISSLVLYLISSM). Residues 46-59 (LTTRLTHTSTMDAQ) lie on the Mitochondrial matrix side of the membrane. A helical transmembrane segment spans residues 60–87 (EVETIWTILPAIILITIALPSLRILYMM). Over 88–227 (DEINNPSMTI…CFEKWSTSML (140 aa)) the chain is Mitochondrial intermembrane. Cu cation-binding residues include His-161, Cys-196, Glu-198, Cys-200, His-204, and Met-207. Residue Glu-198 coordinates Mg(2+).

This sequence belongs to the cytochrome c oxidase subunit 2 family. As to quaternary structure, component of the cytochrome c oxidase (complex IV, CIV), a multisubunit enzyme composed of 14 subunits. The complex is composed of a catalytic core of 3 subunits MT-CO1, MT-CO2 and MT-CO3, encoded in the mitochondrial DNA, and 11 supernumerary subunits COX4I, COX5A, COX5B, COX6A, COX6B, COX6C, COX7A, COX7B, COX7C, COX8 and NDUFA4, which are encoded in the nuclear genome. The complex exists as a monomer or a dimer and forms supercomplexes (SCs) in the inner mitochondrial membrane with NADH-ubiquinone oxidoreductase (complex I, CI) and ubiquinol-cytochrome c oxidoreductase (cytochrome b-c1 complex, complex III, CIII), resulting in different assemblies (supercomplex SCI(1)III(2)IV(1) and megacomplex MCI(2)III(2)IV(2)). Found in a complex with TMEM177, COA6, COX18, COX20, SCO1 and SCO2. Interacts with TMEM177 in a COX20-dependent manner. Interacts with COX20. Interacts with COX16. Cu cation serves as cofactor.

The protein localises to the mitochondrion inner membrane. The enzyme catalyses 4 Fe(II)-[cytochrome c] + O2 + 8 H(+)(in) = 4 Fe(III)-[cytochrome c] + 2 H2O + 4 H(+)(out). Its function is as follows. Component of the cytochrome c oxidase, the last enzyme in the mitochondrial electron transport chain which drives oxidative phosphorylation. The respiratory chain contains 3 multisubunit complexes succinate dehydrogenase (complex II, CII), ubiquinol-cytochrome c oxidoreductase (cytochrome b-c1 complex, complex III, CIII) and cytochrome c oxidase (complex IV, CIV), that cooperate to transfer electrons derived from NADH and succinate to molecular oxygen, creating an electrochemical gradient over the inner membrane that drives transmembrane transport and the ATP synthase. Cytochrome c oxidase is the component of the respiratory chain that catalyzes the reduction of oxygen to water. Electrons originating from reduced cytochrome c in the intermembrane space (IMS) are transferred via the dinuclear copper A center (CU(A)) of subunit 2 and heme A of subunit 1 to the active site in subunit 1, a binuclear center (BNC) formed by heme A3 and copper B (CU(B)). The BNC reduces molecular oxygen to 2 water molecules using 4 electrons from cytochrome c in the IMS and 4 protons from the mitochondrial matrix. This is Cytochrome c oxidase subunit 2 (MT-CO2) from Phyllostomus hastatus (Greater spear-nosed bat).